Here is a 163-residue protein sequence, read N- to C-terminus: Cyclic pyranopterin monophosphate synthase (163 aa).

Residues 75 to 77 (LCH) and 115 to 116 (ME) contribute to the substrate site. The active site involves aspartate 130.

This sequence belongs to the MoaC family. Homohexamer; trimer of dimers.

The enzyme catalyses (8S)-3',8-cyclo-7,8-dihydroguanosine 5'-triphosphate = cyclic pyranopterin phosphate + diphosphate. It functions in the pathway cofactor biosynthesis; molybdopterin biosynthesis. In terms of biological role, catalyzes the conversion of (8S)-3',8-cyclo-7,8-dihydroguanosine 5'-triphosphate to cyclic pyranopterin monophosphate (cPMP). The protein is Cyclic pyranopterin monophosphate synthase of Variovorax paradoxus (strain S110).